The sequence spans 327 residues: Glycerol-3-phosphate dehydrogenase [NAD(P)+] (327 aa).

The NADPH site is built by Phe-14, Arg-35, and Lys-108. Residues Lys-108 and Gly-136 each coordinate sn-glycerol 3-phosphate. Ala-140 serves as a coordination point for NADPH. Residues Lys-191, Asp-244, Ser-254, Arg-255, and Asn-256 each coordinate sn-glycerol 3-phosphate. Lys-191 (proton acceptor) is an active-site residue. An NADPH-binding site is contributed by Arg-255. Residues Leu-275 and Glu-277 each coordinate NADPH.

The protein belongs to the NAD-dependent glycerol-3-phosphate dehydrogenase family.

Its subcellular location is the cytoplasm. The enzyme catalyses sn-glycerol 3-phosphate + NAD(+) = dihydroxyacetone phosphate + NADH + H(+). The catalysed reaction is sn-glycerol 3-phosphate + NADP(+) = dihydroxyacetone phosphate + NADPH + H(+). It functions in the pathway membrane lipid metabolism; glycerophospholipid metabolism. Catalyzes the reduction of the glycolytic intermediate dihydroxyacetone phosphate (DHAP) to sn-glycerol 3-phosphate (G3P), the key precursor for phospholipid synthesis. The chain is Glycerol-3-phosphate dehydrogenase [NAD(P)+] from Agrobacterium fabrum (strain C58 / ATCC 33970) (Agrobacterium tumefaciens (strain C58)).